A 1299-amino-acid chain; its full sequence is DNA-directed RNA polymerase subunit beta' (1299 aa).

Residues Cys60, Cys62, Cys75, and Cys78 each contribute to the Zn(2+) site. Mg(2+)-binding residues include Asp535, Asp537, and Asp539. Residues Cys877, Cys954, Cys961, and Cys964 each coordinate Zn(2+).

The protein belongs to the RNA polymerase beta' chain family. The RNAP catalytic core consists of 2 alpha, 1 beta, 1 beta' and 1 omega subunit. When a sigma factor is associated with the core the holoenzyme is formed, which can initiate transcription. Mg(2+) is required as a cofactor. It depends on Zn(2+) as a cofactor.

The enzyme catalyses RNA(n) + a ribonucleoside 5'-triphosphate = RNA(n+1) + diphosphate. Its function is as follows. DNA-dependent RNA polymerase catalyzes the transcription of DNA into RNA using the four ribonucleoside triphosphates as substrates. This chain is DNA-directed RNA polymerase subunit beta', found in Renibacterium salmoninarum (strain ATCC 33209 / DSM 20767 / JCM 11484 / NBRC 15589 / NCIMB 2235).